Here is a 45-residue protein sequence, read N- to C-terminus: DNA-directed RNA polymerase subunit Rpo12 (45 aa).

3 residues coordinate Zn(2+): C8, C23, and C26.

Belongs to the archaeal Rpo12/eukaryotic RPC10 RNA polymerase subunit family. In terms of assembly, part of the RNA polymerase complex. Zn(2+) is required as a cofactor.

The protein resides in the cytoplasm. It carries out the reaction RNA(n) + a ribonucleoside 5'-triphosphate = RNA(n+1) + diphosphate. Functionally, DNA-dependent RNA polymerase (RNAP) catalyzes the transcription of DNA into RNA using the four ribonucleoside triphosphates as substrates. The polypeptide is DNA-directed RNA polymerase subunit Rpo12 (Methanosarcina acetivorans (strain ATCC 35395 / DSM 2834 / JCM 12185 / C2A)).